Reading from the N-terminus, the 534-residue chain is Putative ammonium transporter 1 (534 aa).

Transmembrane regions (helical) follow at residues 31–51, 69–89, 115–135, 139–159, 184–204, 223–243, 263–283, 291–311, 318–338, 346–366, and 401–421; these read SFFL…FAYL, LLDS…LAYG, FFFQ…AVAE, FITY…VLTH, FAGS…AAWI, ILGH…FGFL, ALAM…YLGV, WTLL…CAGC, ACIW…KLMI, LDAF…SSII, and ICAL…FWIL.

The protein belongs to the ammonia transporter channel (TC 1.A.11.2) family.

Its subcellular location is the membrane. Functionally, involved in the uptake of ammonia. The protein is Putative ammonium transporter 1 (amt-1) of Caenorhabditis elegans.